We begin with the raw amino-acid sequence, 313 residues long: Proclavaminate amidinohydrolase (313 aa).

Mn(2+)-binding residues include histidine 121, aspartate 144, histidine 146, aspartate 148, aspartate 235, and aspartate 237.

Belongs to the arginase family. Homohexamer. Requires Mn(2+) as cofactor.

The enzyme catalyses amidinoproclavaminate + H2O = proclavaminate + urea. It functions in the pathway antibiotic biosynthesis; clavulanate biosynthesis; clavulanate from D-glyceraldehyde 3-phosphate and L-arginine: step 4/8. This Streptomyces clavuligerus protein is Proclavaminate amidinohydrolase (pah).